The chain runs to 274 residues: Orotidine 5'-phosphate decarboxylase (274 aa).

Residues Asp40, 62–64, 93–102, Tyr227, and Arg245 each bind substrate; these read KTH and DRKFVDIGNT. The Proton donor role is filled by Lys95.

This sequence belongs to the OMP decarboxylase family.

The enzyme catalyses orotidine 5'-phosphate + H(+) = UMP + CO2. It functions in the pathway pyrimidine metabolism; UMP biosynthesis via de novo pathway; UMP from orotate: step 2/2. In Coccidioides immitis (strain RS) (Valley fever fungus), this protein is Orotidine 5'-phosphate decarboxylase (URA3).